Consider the following 214-residue polypeptide: Outer-membrane lipoprotein LolB (214 aa).

The N-terminal stretch at 1 to 25 (MNNLKRFTKSIFSCIALSGLLFLGG) is a signal peptide. Residue C26 is the site of N-palmitoyl cysteine attachment. A lipid anchor (S-diacylglycerol cysteine) is attached at C26.

It belongs to the LolB family. Monomer.

The protein localises to the cell outer membrane. In terms of biological role, plays a critical role in the incorporation of lipoproteins in the outer membrane after they are released by the LolA protein. The chain is Outer-membrane lipoprotein LolB from Shewanella oneidensis (strain ATCC 700550 / JCM 31522 / CIP 106686 / LMG 19005 / NCIMB 14063 / MR-1).